We begin with the raw amino-acid sequence, 231 residues long: NADH-ubiquinone oxidoreductase chain 4 (231 aa).

The next 6 membrane-spanning stretches (helical) occupy residues 1 to 21, 34 to 54, 63 to 85, 89 to 111, 128 to 148, and 156 to 176; these read PIAGSMVLAAILLKLGGYGII, MFLPFIVLALWGAILANLTCL, IAYSSVSHMGLVVAAIIIQTPWG, AMALMIAHGFTSSALFCLANTTY, ILPMTTTWWLLANLMNIATPP, and LLIMSALFNWCPTTIIMLGLS.

It belongs to the complex I subunit 4 family.

It localises to the mitochondrion membrane. It carries out the reaction a ubiquinone + NADH + 5 H(+)(in) = a ubiquinol + NAD(+) + 4 H(+)(out). In terms of biological role, core subunit of the mitochondrial membrane respiratory chain NADH dehydrogenase (Complex I) that is believed to belong to the minimal assembly required for catalysis. Complex I functions in the transfer of electrons from NADH to the respiratory chain. The immediate electron acceptor for the enzyme is believed to be ubiquinone. The polypeptide is NADH-ubiquinone oxidoreductase chain 4 (MT-ND4) (Trimeresurus stejnegeri (Chinese green tree viper)).